A 127-amino-acid polypeptide reads, in one-letter code: Large ribosomal subunit protein uL22 (127 aa).

The protein belongs to the universal ribosomal protein uL22 family. In terms of assembly, part of the 50S ribosomal subunit.

This protein binds specifically to 23S rRNA; its binding is stimulated by other ribosomal proteins, e.g. L4, L17, and L20. It is important during the early stages of 50S assembly. It makes multiple contacts with different domains of the 23S rRNA in the assembled 50S subunit and ribosome. Its function is as follows. The globular domain of the protein is located near the polypeptide exit tunnel on the outside of the subunit, while an extended beta-hairpin is found that lines the wall of the exit tunnel in the center of the 70S ribosome. In Rhizorhabdus wittichii (strain DSM 6014 / CCUG 31198 / JCM 15750 / NBRC 105917 / EY 4224 / RW1) (Sphingomonas wittichii), this protein is Large ribosomal subunit protein uL22.